The primary structure comprises 89 residues: Probable monothiol glutaredoxin GrlA (89 aa).

In terms of domain architecture, Glutaredoxin spans 1 to 89 (MLYMKGTPKM…EPMLRDAVAA (89 aa)). Lysine 5 contacts glutathione. Cysteine 13 is a [2Fe-2S] cluster binding site. Glutathione-binding positions include arginine 42, phenylalanine 54, and 67 to 68 (SD).

The protein belongs to the glutaredoxin family. Monothiol subfamily.

In Legionella pneumophila subsp. pneumophila (strain Philadelphia 1 / ATCC 33152 / DSM 7513), this protein is Probable monothiol glutaredoxin GrlA (grlA).